We begin with the raw amino-acid sequence, 174 residues long: MGIEEKAGNLGIVTTTLETVVNWGRTNAMWPLLFGLACCAIEMMGAQASNYDLSRFGMELNRASPRQADLMIVAGRVSRKMAPVVRRLYDQMPEPKWVIAMGDCAACGGIFNNYAIVQGVDEVVPVDVYVAGCPPRPEALIDGIMMLHQKVMREKLSGKKEAPIRIDQPLVQVK.

The [4Fe-4S] cluster site is built by C38, C39, C104, and C133.

This sequence belongs to the complex I 20 kDa subunit family. As to quaternary structure, NDH-1 is composed of 14 different subunits. Subunits NuoB, C, D, E, F, and G constitute the peripheral sector of the complex. The cofactor is [4Fe-4S] cluster.

It localises to the cell membrane. The enzyme catalyses a quinone + NADH + 5 H(+)(in) = a quinol + NAD(+) + 4 H(+)(out). Its function is as follows. NDH-1 shuttles electrons from NADH, via FMN and iron-sulfur (Fe-S) centers, to quinones in the respiratory chain. The immediate electron acceptor for the enzyme in this species is believed to be ubiquinone. Couples the redox reaction to proton translocation (for every two electrons transferred, four hydrogen ions are translocated across the cytoplasmic membrane), and thus conserves the redox energy in a proton gradient. This is NADH-quinone oxidoreductase subunit B 1 from Chloroflexus aggregans (strain MD-66 / DSM 9485).